The sequence spans 473 residues: Peptidoglycan DL-endopeptidase CwlO (473 aa).

Residues 1–30 (MRKSLITLGLASVIGTSSFLIPFTSKTASA) form the signal peptide. Disordered regions lie at residues 31-52 (ETLD…SSIE), 79-98 (ALDT…KTKE), and 237-337 (EASE…GTVI). Basic and acidic residues predominate over residues 33 to 44 (LDEKKQKIESKQ). Polar residues predominate over residues 241–250 (LANQKANTEA). Basic and acidic residues-rich tracts occupy residues 251-260 (EQARIKKEQE) and 267-277 (KKQEEAQKASD). The span at 291 to 337 (SSKASSSDDSSDNSSDNSSNGSSNSSSNGSSSKKSSGSNSNSGGTVI) shows a compositional bias: low complexity. A NlpC/P60 domain is found at 340 to 471 (SGGIEGAISV…AAFKGVVRRV (132 aa)). The active-site Nucleophile is the Cys377. Catalysis depends on His431, which acts as the Proton acceptor. Residue Asn443 is part of the active site.

The protein belongs to the peptidase C40 family. Identified in the extracellular proteome as a number of processing products of about 50 and 30 kDa.

It is found in the secreted. It localises to the cell wall. With respect to regulation, detected in exponentially growing cells, the 50 and 30 kDa processing products disappear upon entry into stationary phase with the concomitant appearance of a 20 kDa products. The 50 kDa form persists in the absence of extracellular proteases. Functionally, the C-terminal part of CwlO shows a cell wall hydrolytic DL-endopeptidase activity. This is Peptidoglycan DL-endopeptidase CwlO (cwlO) from Bacillus subtilis (strain 168).